The chain runs to 472 residues: Siroheme synthase (472 aa).

A precorrin-2 dehydrogenase /sirohydrochlorin ferrochelatase region spans residues 1–204; sequence MDYLPIFTKL…GQTEKAIALM (204 aa). Residues 22–23 and 43–44 each bind NAD(+); these read SI and LE. S128 is subject to Phosphoserine. The uroporphyrinogen-III C-methyltransferase stretch occupies residues 215-472; it reads GDVALVGAGP…SRDPFLVNLA (258 aa). Residue P224 coordinates S-adenosyl-L-methionine. Residue D247 is the Proton acceptor of the active site. The active-site Proton donor is the K269. S-adenosyl-L-methionine-binding positions include 300-302, I305, 330-331, M382, and G411; these read GGD and TA.

In the N-terminal section; belongs to the precorrin-2 dehydrogenase / sirohydrochlorin ferrochelatase family. It in the C-terminal section; belongs to the precorrin methyltransferase family.

The catalysed reaction is uroporphyrinogen III + 2 S-adenosyl-L-methionine = precorrin-2 + 2 S-adenosyl-L-homocysteine + H(+). The enzyme catalyses precorrin-2 + NAD(+) = sirohydrochlorin + NADH + 2 H(+). It catalyses the reaction siroheme + 2 H(+) = sirohydrochlorin + Fe(2+). Its pathway is cofactor biosynthesis; adenosylcobalamin biosynthesis; precorrin-2 from uroporphyrinogen III: step 1/1. The protein operates within cofactor biosynthesis; adenosylcobalamin biosynthesis; sirohydrochlorin from precorrin-2: step 1/1. It functions in the pathway porphyrin-containing compound metabolism; siroheme biosynthesis; precorrin-2 from uroporphyrinogen III: step 1/1. It participates in porphyrin-containing compound metabolism; siroheme biosynthesis; siroheme from sirohydrochlorin: step 1/1. Its pathway is porphyrin-containing compound metabolism; siroheme biosynthesis; sirohydrochlorin from precorrin-2: step 1/1. Functionally, multifunctional enzyme that catalyzes the SAM-dependent methylations of uroporphyrinogen III at position C-2 and C-7 to form precorrin-2 via precorrin-1. Then it catalyzes the NAD-dependent ring dehydrogenation of precorrin-2 to yield sirohydrochlorin. Finally, it catalyzes the ferrochelation of sirohydrochlorin to yield siroheme. The chain is Siroheme synthase from Psychromonas ingrahamii (strain DSM 17664 / CCUG 51855 / 37).